The sequence spans 225 residues: ATP-dependent dethiobiotin synthetase BioD (225 aa).

Position 12–17 (12–17) interacts with ATP; that stretch reads GVGKTV. Mg(2+) is bound at residue threonine 16. The active site involves lysine 37. Threonine 41 is a binding site for substrate. ATP-binding positions include aspartate 46, 105-108, 166-167, and 196-198; these read EGAG, GS, and PEG. Aspartate 46 and glutamate 105 together coordinate Mg(2+).

The protein belongs to the dethiobiotin synthetase family. Homodimer. Mg(2+) is required as a cofactor.

The protein localises to the cytoplasm. The catalysed reaction is (7R,8S)-7,8-diammoniononanoate + CO2 + ATP = (4R,5S)-dethiobiotin + ADP + phosphate + 3 H(+). It functions in the pathway cofactor biosynthesis; biotin biosynthesis; biotin from 7,8-diaminononanoate: step 1/2. Catalyzes a mechanistically unusual reaction, the ATP-dependent insertion of CO2 between the N7 and N8 nitrogen atoms of 7,8-diaminopelargonic acid (DAPA, also called 7,8-diammoniononanoate) to form a ureido ring. The sequence is that of ATP-dependent dethiobiotin synthetase BioD from Mycobacteroides abscessus (strain ATCC 19977 / DSM 44196 / CCUG 20993 / CIP 104536 / JCM 13569 / NCTC 13031 / TMC 1543 / L948) (Mycobacterium abscessus).